The chain runs to 295 residues: ATP synthase gamma chain (295 aa).

This sequence belongs to the ATPase gamma chain family. As to quaternary structure, F-type ATPases have 2 components, CF(1) - the catalytic core - and CF(0) - the membrane proton channel. CF(1) has five subunits: alpha(3), beta(3), gamma(1), delta(1), epsilon(1). CF(0) has three main subunits: a, b and c.

The protein resides in the cell inner membrane. Its function is as follows. Produces ATP from ADP in the presence of a proton gradient across the membrane. The gamma chain is believed to be important in regulating ATPase activity and the flow of protons through the CF(0) complex. This Sulfurovum sp. (strain NBC37-1) protein is ATP synthase gamma chain.